We begin with the raw amino-acid sequence, 183 residues long: Protein jagunal homolog 1 (183 aa).

At 1-39 the chain is on the cytoplasmic side; sequence MASRAGPRAAGTDGSDFQHRERVAMHYQMSVTLKYEIKK. Ser-3 carries the phosphoserine modification. A helical transmembrane segment spans residues 40–60; the sequence is LIYVHLVIWLLLVAKMSVGHL. Residues 61-71 lie on the Lumenal side of the membrane; the sequence is RLLSHDQVAMP. Residues 72-92 form a helical membrane-spanning segment; the sequence is YQWEYPYLLSIVPSVLGLLSF. Over 93 to 96 the chain is Cytoplasmic; that stretch reads PRNN. A helical transmembrane segment spans residues 97-117; the sequence is ISYLVLSMISMGLFSIAPLIY. Residues 118 to 137 lie on the Lumenal side of the membrane; that stretch reads GSMEMFPAAQQLYRHGKAYR. Residues 138 to 158 form a helical membrane-spanning segment; the sequence is FLFGFSAVSVMYLVLVLAVQV. Residues 159–183 are Cytoplasmic-facing; the sequence is HAWQLYYSKKLLDSWFTSTQEKKRK.

Belongs to the jagunal family. In terms of assembly, interacts with COPA, COPB2 and COPG2.

It is found in the endoplasmic reticulum membrane. Functionally, endoplasmic reticulum transmembrane protein involved in vesicle-mediated transport, which is required for neutrophil function. Required for vesicle-mediated transport; it is however unclear whether it is involved in early secretory pathway or intracellular protein transport. Acts as a regulator of neutrophil function, probably via its role in vesicle-mediated transport: required for defense against fungal pathogens and for granulocyte colony-stimulating factor (GM-CSF) signaling pathway; possibly by regulating glycosylation and/or targeting of proteins contributing to the viability and migration of neutrophils. In Mus musculus (Mouse), this protein is Protein jagunal homolog 1.